An 84-amino-acid chain; its full sequence is Toxin Aah4 (84 aa).

The N-terminal stretch at 1–19 (MNYLIMFSLALLLVIGVES) is a signal peptide. Residues 21-82 (RDGYIVDSKN…PIKDPSDDCH (62 aa)) form the LCN-type CS-alpha/beta domain. 4 disulfide bridges follow: Cys-31–Cys-81, Cys-35–Cys-53, Cys-39–Cys-63, and Cys-43–Cys-65. Position 84 (Arg-84) is a propeptide, removed by a carboxypeptidase.

The protein belongs to the long (4 C-C) scorpion toxin superfamily. Sodium channel inhibitor family. Alpha subfamily. As to expression, expressed by the venom gland.

The protein localises to the secreted. Functionally, alpha toxins bind voltage-independently at site-3 of sodium channels (Nav) and inhibit the inactivation of the activated channels, thereby blocking neuronal transmission. This toxin seems to specifically act on Nav1.6/SCN8A sodium channel. In vitro, it inhibits the proliferation of the prostate cancer cell line DU145 (IC(50)=15 uM). It shows low effect on the adhesion of DU145 cells to fibronectin (at 15 uM) and is inactive on DU145 cells migration. In Androctonus australis (Sahara scorpion), this protein is Toxin Aah4.